We begin with the raw amino-acid sequence, 181 residues long: Negative modulator of initiation of replication (181 aa).

3 interaction with DNA regions span residues 87-88 (AV), 116-120 (RTRVY), and 150-156 (NTNTGRK).

Belongs to the SeqA family. Homodimer. Polymerizes to form helical filaments.

The protein localises to the cytoplasm. Negative regulator of replication initiation, which contributes to regulation of DNA replication and ensures that replication initiation occurs exactly once per chromosome per cell cycle. Binds to pairs of hemimethylated GATC sequences in the oriC region, thus preventing assembly of replication proteins and re-initiation at newly replicated origins. Repression is relieved when the region becomes fully methylated. The chain is Negative modulator of initiation of replication from Shigella dysenteriae serotype 1 (strain Sd197).